Consider the following 336-residue polypeptide: Glyceraldehyde-3-phosphate dehydrogenase (336 aa).

NAD(+) is bound by residues 12-13, Asp34, and Arg79; that span reads RI. Residues 150 to 152, Thr181, 210 to 211, and Arg233 contribute to the D-glyceraldehyde 3-phosphate site; these read SCT and TG. Cys151 serves as the catalytic Nucleophile. Asn315 lines the NAD(+) pocket.

The protein belongs to the glyceraldehyde-3-phosphate dehydrogenase family. In terms of assembly, homotetramer.

It localises to the cytoplasm. It carries out the reaction D-glyceraldehyde 3-phosphate + phosphate + NAD(+) = (2R)-3-phospho-glyceroyl phosphate + NADH + H(+). It participates in carbohydrate degradation; glycolysis; pyruvate from D-glyceraldehyde 3-phosphate: step 1/5. In terms of biological role, involved in osmoadaptation. In Emericella nidulans (strain FGSC A4 / ATCC 38163 / CBS 112.46 / NRRL 194 / M139) (Aspergillus nidulans), this protein is Glyceraldehyde-3-phosphate dehydrogenase (gpdA).